The sequence spans 411 residues: Bifunctional protein GlmU (411 aa).

The tract at residues 1–204 (MDAIILCAGK…NGKLHGVELK (204 aa)) is pyrophosphorylase. UTP-binding positions include 6 to 9 (LCAG), Gln-74, and Gly-79. 4 residues coordinate N-acetyl-alpha-D-glucosamine 1-phosphate: Thr-80, Gly-130, Asn-142, and Asn-158. The linker stretch occupies residues 205–224 (GYWNDIGHPWDVLSANNHFL). An N-acetyltransferase region spans residues 225 to 411 (NKIISKVSGK…DELVITKKRN (187 aa)). Residue His-308 is the Proton acceptor of the active site. Acetyl-CoA contacts are provided by Ala-384 and Lys-401.

This sequence in the N-terminal section; belongs to the N-acetylglucosamine-1-phosphate uridyltransferase family. In the C-terminal section; belongs to the transferase hexapeptide repeat family.

The enzyme catalyses N-acetyl-alpha-D-glucosamine 1-phosphate + UTP + H(+) = UDP-N-acetyl-alpha-D-glucosamine + diphosphate. It carries out the reaction alpha-D-glucosamine 1-phosphate + acetyl-CoA = N-acetyl-alpha-D-glucosamine 1-phosphate + CoA + H(+). Its pathway is nucleotide-sugar biosynthesis; UDP-N-acetyl-alpha-D-glucosamine biosynthesis; N-acetyl-alpha-D-glucosamine 1-phosphate from alpha-D-glucosamine 6-phosphate (route II): step 2/2. It participates in nucleotide-sugar biosynthesis; UDP-N-acetyl-alpha-D-glucosamine biosynthesis; UDP-N-acetyl-alpha-D-glucosamine from N-acetyl-alpha-D-glucosamine 1-phosphate: step 1/1. Functionally, catalyzes the last two sequential reactions in the de novo biosynthetic pathway for UDP-N-acetyl-glucosamine (UDP-GlcNAc). Responsible for the acetylation of GlcN-1-P to GlcNAc-1-P, and for the uridyl transfer from UTP to GlcNAc-1-P, to produce UDP-GlcNAc and pyrophosphate. In Methanococcus maripaludis (strain DSM 14266 / JCM 13030 / NBRC 101832 / S2 / LL), this protein is Bifunctional protein GlmU.